The chain runs to 399 residues: 4-hydroxy-3-methylbut-2-enyl diphosphate reductase (399 aa).

Position 66 (Cys-66) interacts with [4Fe-4S] cluster. Position 96 (His-96) interacts with (2E)-4-hydroxy-3-methylbut-2-enyl diphosphate. His-96 provides a ligand contact to dimethylallyl diphosphate. His-96 contributes to the isopentenyl diphosphate binding site. Cys-157 is a [4Fe-4S] cluster binding site. His-185 is a binding site for (2E)-4-hydroxy-3-methylbut-2-enyl diphosphate. His-185 is a binding site for dimethylallyl diphosphate. Isopentenyl diphosphate is bound at residue His-185. Glu-187 (proton donor) is an active-site residue. Position 250 (Thr-250) interacts with (2E)-4-hydroxy-3-methylbut-2-enyl diphosphate. Cys-288 provides a ligand contact to [4Fe-4S] cluster. (2E)-4-hydroxy-3-methylbut-2-enyl diphosphate-binding residues include Ser-317, Ser-318, Asn-319, and Ser-380. Dimethylallyl diphosphate-binding residues include Ser-317, Ser-318, Asn-319, and Ser-380. The isopentenyl diphosphate site is built by Ser-317, Ser-318, Asn-319, and Ser-380.

It belongs to the IspH family. Requires [4Fe-4S] cluster as cofactor.

The enzyme catalyses isopentenyl diphosphate + 2 oxidized [2Fe-2S]-[ferredoxin] + H2O = (2E)-4-hydroxy-3-methylbut-2-enyl diphosphate + 2 reduced [2Fe-2S]-[ferredoxin] + 2 H(+). It carries out the reaction dimethylallyl diphosphate + 2 oxidized [2Fe-2S]-[ferredoxin] + H2O = (2E)-4-hydroxy-3-methylbut-2-enyl diphosphate + 2 reduced [2Fe-2S]-[ferredoxin] + 2 H(+). It participates in isoprenoid biosynthesis; dimethylallyl diphosphate biosynthesis; dimethylallyl diphosphate from (2E)-4-hydroxy-3-methylbutenyl diphosphate: step 1/1. It functions in the pathway isoprenoid biosynthesis; isopentenyl diphosphate biosynthesis via DXP pathway; isopentenyl diphosphate from 1-deoxy-D-xylulose 5-phosphate: step 6/6. In terms of biological role, catalyzes the conversion of 1-hydroxy-2-methyl-2-(E)-butenyl 4-diphosphate (HMBPP) into a mixture of isopentenyl diphosphate (IPP) and dimethylallyl diphosphate (DMAPP). Acts in the terminal step of the DOXP/MEP pathway for isoprenoid precursor biosynthesis. The chain is 4-hydroxy-3-methylbut-2-enyl diphosphate reductase from Synechococcus sp. (strain CC9902).